The primary structure comprises 450 residues: UDP-N-acetylmuramoylalanine--D-glutamate ligase (450 aa).

Residue 115–121 (GTNGKTT) coordinates ATP.

It belongs to the MurCDEF family.

The protein localises to the cytoplasm. It carries out the reaction UDP-N-acetyl-alpha-D-muramoyl-L-alanine + D-glutamate + ATP = UDP-N-acetyl-alpha-D-muramoyl-L-alanyl-D-glutamate + ADP + phosphate + H(+). The protein operates within cell wall biogenesis; peptidoglycan biosynthesis. In terms of biological role, cell wall formation. Catalyzes the addition of glutamate to the nucleotide precursor UDP-N-acetylmuramoyl-L-alanine (UMA). This is UDP-N-acetylmuramoylalanine--D-glutamate ligase from Caldanaerobacter subterraneus subsp. tengcongensis (strain DSM 15242 / JCM 11007 / NBRC 100824 / MB4) (Thermoanaerobacter tengcongensis).